The chain runs to 336 residues: HTH-type transcriptional regulator CdhR (336 aa).

Residues Val-213–Val-311 enclose the HTH araC/xylS-type domain. 2 DNA-binding regions (H-T-H motif) span residues Leu-230–Leu-251 and Val-278–Phe-301. The disordered stretch occupies residues Pro-305–Gly-336.

Induces the transcription of the PA5384-PA5388 operon in response to carnitine. This operon is involved in the degradation of L-carnitine, and allows P.aeruginosa to grow on L-carnitine as the sole source of carbon and nitrogen. The polypeptide is HTH-type transcriptional regulator CdhR (cdhR) (Pseudomonas aeruginosa (strain ATCC 15692 / DSM 22644 / CIP 104116 / JCM 14847 / LMG 12228 / 1C / PRS 101 / PAO1)).